A 239-amino-acid chain; its full sequence is Phospholipase A2 (239 aa).

A signal peptide spans 1–19 (MSLIIVLVISVLSADAVLS). Residues 20-105 (MDNELYLNLE…GRCLSVGESE (86 aa)) constitute a propeptide that is removed on maturation. Ca(2+)-binding residues include tryptophan 113, glycine 115, and glycine 117. 5 disulfides stabilise this stretch: cysteine 114-cysteine 136, cysteine 135-cysteine 174, cysteine 142-cysteine 167, cysteine 165-cysteine 202, and cysteine 207-cysteine 217. Histidine 139 is a catalytic residue. Aspartate 140 is a Ca(2+) binding site. Residues 211–213 (RSP) constitute a propeptide that is removed on maturation.

Belongs to the phospholipase A2 family. Group III subfamily. As to quaternary structure, heterodimer composed of a small subunit and a large subunit; disulfid-linked. Requires Ca(2+) as cofactor. In terms of tissue distribution, expressed by the venom gland.

Its subcellular location is the secreted. The catalysed reaction is a 1,2-diacyl-sn-glycero-3-phosphocholine + H2O = a 1-acyl-sn-glycero-3-phosphocholine + a fatty acid + H(+). Functionally, toxic phospholipase A2, which may catalyze the calcium-dependent hydrolysis of the 2-acyl groups in 3-sn-phosphoglycerides. Inhibits both skeletal (RYR1) and cardiac (RYR2) ryanodine receptors (calcium release channels). Probably blocks ryanodine receptors by generating a lipid product. This chain is Phospholipase A2, found in Hoffmannihadrurus gertschi (Scorpion).